A 398-amino-acid chain; its full sequence is 1-deoxy-D-xylulose 5-phosphate reductoisomerase (398 aa).

NADPH contacts are provided by threonine 10, glycine 11, serine 12, isoleucine 13, glycine 36, lysine 37, asparagine 38, and asparagine 124. Lysine 125 is a binding site for 1-deoxy-D-xylulose 5-phosphate. An NADPH-binding site is contributed by glutamate 126. Aspartate 150 lines the Mn(2+) pocket. Positions 151, 152, 186, and 209 each coordinate 1-deoxy-D-xylulose 5-phosphate. Residue glutamate 152 coordinates Mn(2+). Glycine 215 contacts NADPH. Positions 222, 227, 228, and 231 each coordinate 1-deoxy-D-xylulose 5-phosphate. Glutamate 231 contacts Mn(2+).

Belongs to the DXR family. Homodimer. Mg(2+) is required as a cofactor. Mn(2+) serves as cofactor.

It carries out the reaction 2-C-methyl-D-erythritol 4-phosphate + NADP(+) = 1-deoxy-D-xylulose 5-phosphate + NADPH + H(+). Its pathway is isoprenoid biosynthesis; isopentenyl diphosphate biosynthesis via DXP pathway; isopentenyl diphosphate from 1-deoxy-D-xylulose 5-phosphate: step 1/6. In terms of biological role, catalyzes the NADPH-dependent rearrangement and reduction of 1-deoxy-D-xylulose-5-phosphate (DXP) to 2-C-methyl-D-erythritol 4-phosphate (MEP). The chain is 1-deoxy-D-xylulose 5-phosphate reductoisomerase from Escherichia coli O157:H7.